The sequence spans 150 residues: Deoxyuridine 5'-triphosphate nucleotidohydrolase (150 aa).

Substrate is bound by residues 69–71 (RSG), asparagine 82, 86–88 (LID), and lysine 96.

The protein belongs to the dUTPase family. The cofactor is Mg(2+).

The enzyme catalyses dUTP + H2O = dUMP + diphosphate + H(+). The protein operates within pyrimidine metabolism; dUMP biosynthesis; dUMP from dCTP (dUTP route): step 2/2. Functionally, this enzyme is involved in nucleotide metabolism: it produces dUMP, the immediate precursor of thymidine nucleotides and it decreases the intracellular concentration of dUTP so that uracil cannot be incorporated into DNA. The polypeptide is Deoxyuridine 5'-triphosphate nucleotidohydrolase (Neisseria meningitidis serogroup B (strain ATCC BAA-335 / MC58)).